A 448-amino-acid polypeptide reads, in one-letter code: tRNA modification GTPase MnmE (448 aa).

(6S)-5-formyl-5,6,7,8-tetrahydrofolate is bound by residues R25, E83, and K122. In terms of domain architecture, TrmE-type G spans G218–D372. N228 is a binding site for K(+). Residues N228 to S233, S247 to T253, and D272 to G275 each bind GTP. S232 contacts Mg(2+). Residues S247, I249, and T252 each coordinate K(+). T253 provides a ligand contact to Mg(2+). A (6S)-5-formyl-5,6,7,8-tetrahydrofolate-binding site is contributed by K448.

The protein belongs to the TRAFAC class TrmE-Era-EngA-EngB-Septin-like GTPase superfamily. TrmE GTPase family. As to quaternary structure, homodimer. Heterotetramer of two MnmE and two MnmG subunits. It depends on K(+) as a cofactor.

Its subcellular location is the cytoplasm. Its function is as follows. Exhibits a very high intrinsic GTPase hydrolysis rate. Involved in the addition of a carboxymethylaminomethyl (cmnm) group at the wobble position (U34) of certain tRNAs, forming tRNA-cmnm(5)s(2)U34. This Nitratiruptor sp. (strain SB155-2) protein is tRNA modification GTPase MnmE.